The primary structure comprises 463 residues: Spermidine/putrescine import ATP-binding protein PotA (463 aa).

One can recognise an ABC transporter domain in the interval Ile10 to Ile240. Residue Gly42–Thr49 coordinates ATP.

Belongs to the ABC transporter superfamily. Spermidine/putrescine importer (TC 3.A.1.11.1) family. As to quaternary structure, the complex is composed of two ATP-binding proteins (PotA), two transmembrane proteins (PotB and PotC) and a solute-binding protein (PotD).

It localises to the cell inner membrane. The catalysed reaction is ATP + H2O + polyamine-[polyamine-binding protein]Side 1 = ADP + phosphate + polyamineSide 2 + [polyamine-binding protein]Side 1.. In terms of biological role, part of the ABC transporter complex PotABCD involved in spermidine/putrescine import. Responsible for energy coupling to the transport system. The chain is Spermidine/putrescine import ATP-binding protein PotA from Bacteroides thetaiotaomicron (strain ATCC 29148 / DSM 2079 / JCM 5827 / CCUG 10774 / NCTC 10582 / VPI-5482 / E50).